We begin with the raw amino-acid sequence, 873 residues long: DNA mismatch repair protein MutS (873 aa).

620–627 serves as a coordination point for ATP; that stretch reads GPNMAGKS.

It belongs to the DNA mismatch repair MutS family.

In terms of biological role, this protein is involved in the repair of mismatches in DNA. It is possible that it carries out the mismatch recognition step. This protein has a weak ATPase activity. The protein is DNA mismatch repair protein MutS of Ruminiclostridium cellulolyticum (strain ATCC 35319 / DSM 5812 / JCM 6584 / H10) (Clostridium cellulolyticum).